A 335-amino-acid polypeptide reads, in one-letter code: Holliday junction branch migration complex subunit RuvB (335 aa).

Residues 1–181 (MSERVISPEP…FGLLIRLNLY (181 aa)) form a large ATPase domain (RuvB-L) region. ATP is bound by residues Leu-20, Arg-21, Gly-62, Lys-65, Thr-66, Thr-67, 128 to 130 (EDF), Arg-171, Tyr-181, and Arg-218. Thr-66 is a binding site for Mg(2+). Residues 182 to 252 (SPEDLEKIVT…IAGAGLALLQ (71 aa)) form a small ATPAse domain (RuvB-S) region. Positions 255–335 (ELGLDDIDRR…KLNHSQKTLF (81 aa)) are head domain (RuvB-H). Arg-310 and Arg-315 together coordinate DNA.

Belongs to the RuvB family. In terms of assembly, homohexamer. Forms an RuvA(8)-RuvB(12)-Holliday junction (HJ) complex. HJ DNA is sandwiched between 2 RuvA tetramers; dsDNA enters through RuvA and exits via RuvB. An RuvB hexamer assembles on each DNA strand where it exits the tetramer. Each RuvB hexamer is contacted by two RuvA subunits (via domain III) on 2 adjacent RuvB subunits; this complex drives branch migration. In the full resolvosome a probable DNA-RuvA(4)-RuvB(12)-RuvC(2) complex forms which resolves the HJ.

Its subcellular location is the cytoplasm. The catalysed reaction is ATP + H2O = ADP + phosphate + H(+). Functionally, the RuvA-RuvB-RuvC complex processes Holliday junction (HJ) DNA during genetic recombination and DNA repair, while the RuvA-RuvB complex plays an important role in the rescue of blocked DNA replication forks via replication fork reversal (RFR). RuvA specifically binds to HJ cruciform DNA, conferring on it an open structure. The RuvB hexamer acts as an ATP-dependent pump, pulling dsDNA into and through the RuvAB complex. RuvB forms 2 homohexamers on either side of HJ DNA bound by 1 or 2 RuvA tetramers; 4 subunits per hexamer contact DNA at a time. Coordinated motions by a converter formed by DNA-disengaged RuvB subunits stimulates ATP hydrolysis and nucleotide exchange. Immobilization of the converter enables RuvB to convert the ATP-contained energy into a lever motion, pulling 2 nucleotides of DNA out of the RuvA tetramer per ATP hydrolyzed, thus driving DNA branch migration. The RuvB motors rotate together with the DNA substrate, which together with the progressing nucleotide cycle form the mechanistic basis for DNA recombination by continuous HJ branch migration. Branch migration allows RuvC to scan DNA until it finds its consensus sequence, where it cleaves and resolves cruciform DNA. In Methanoregula boonei (strain DSM 21154 / JCM 14090 / 6A8), this protein is Holliday junction branch migration complex subunit RuvB.